A 21-amino-acid chain; its full sequence is 71 kDa F-actin-binding protein (21 aa).

It to yeast fimbrin. Post-translationally, the N-terminus is blocked.

Binds directly to F-actin and induces actin filament bundling. May function as a regulator of actin filament organization. This chain is 71 kDa F-actin-binding protein, found in Tetrahymena pyriformis.